A 198-amino-acid polypeptide reads, in one-letter code: Sensory transduction protein RegX3 (198 aa).

The 87-residue stretch at 1 to 87 folds into the Response regulatory domain; it reads MVTDGPAALA…ELIARIRAVL (87 aa). Asp-23 carries the post-translational modification 4-aspartylphosphate. Positions 99–198 form a DNA-binding region, ompR/PhoB-type; it reads DGVLESGPLR…VRGLGYKLES (100 aa).

In terms of processing, phosphorylated by SenX3.

In terms of biological role, member of the two-component regulatory system SenX3/RegX3. The sequence is that of Sensory transduction protein RegX3 (rgx3) from Mycobacterium leprae (strain TN).